We begin with the raw amino-acid sequence, 346 residues long: Beta-hexosaminidase (346 aa).

Substrate-binding positions include Asp62, Arg70, Arg134, and 164-165; that span reads KH. The Proton donor/acceptor role is filled by His177. The active-site Nucleophile is the Asp249.

It belongs to the glycosyl hydrolase 3 family. NagZ subfamily.

The protein localises to the cytoplasm. The catalysed reaction is Hydrolysis of terminal non-reducing N-acetyl-D-hexosamine residues in N-acetyl-beta-D-hexosaminides.. It participates in cell wall biogenesis; peptidoglycan recycling. Functionally, plays a role in peptidoglycan recycling by cleaving the terminal beta-1,4-linked N-acetylglucosamine (GlcNAc) from peptide-linked peptidoglycan fragments, giving rise to free GlcNAc, anhydro-N-acetylmuramic acid and anhydro-N-acetylmuramic acid-linked peptides. This Actinobacillus succinogenes (strain ATCC 55618 / DSM 22257 / CCUG 43843 / 130Z) protein is Beta-hexosaminidase.